We begin with the raw amino-acid sequence, 74 residues long: uncharacterized protein (74 aa).

Residues 29–63 (LNSKKSALQKDKELQQQAKAQESALAGEELRRRAL) are a coiled coil.

This is an uncharacterized protein from Pseudoalteromonas phage PM2 (Bacteriophage PM2).